A 584-amino-acid polypeptide reads, in one-letter code: 2-succinyl-5-enolpyruvyl-6-hydroxy-3-cyclohexene-1-carboxylate synthase (584 aa).

Belongs to the TPP enzyme family. MenD subfamily. Homodimer. The cofactor is Mg(2+). It depends on Mn(2+) as a cofactor. Thiamine diphosphate serves as cofactor.

The catalysed reaction is isochorismate + 2-oxoglutarate + H(+) = 5-enolpyruvoyl-6-hydroxy-2-succinyl-cyclohex-3-ene-1-carboxylate + CO2. The protein operates within quinol/quinone metabolism; 1,4-dihydroxy-2-naphthoate biosynthesis; 1,4-dihydroxy-2-naphthoate from chorismate: step 2/7. It participates in quinol/quinone metabolism; menaquinone biosynthesis. In terms of biological role, catalyzes the thiamine diphosphate-dependent decarboxylation of 2-oxoglutarate and the subsequent addition of the resulting succinic semialdehyde-thiamine pyrophosphate anion to isochorismate to yield 2-succinyl-5-enolpyruvyl-6-hydroxy-3-cyclohexene-1-carboxylate (SEPHCHC). In Bacillus cereus (strain ATCC 14579 / DSM 31 / CCUG 7414 / JCM 2152 / NBRC 15305 / NCIMB 9373 / NCTC 2599 / NRRL B-3711), this protein is 2-succinyl-5-enolpyruvyl-6-hydroxy-3-cyclohexene-1-carboxylate synthase.